The sequence spans 723 residues: Nucleolar protein 11 (723 aa).

It is found in the nucleus. Its subcellular location is the nucleolus. Its function is as follows. Ribosome biogenesis factor. May be required for both optimal rDNA transcription and pre-rRNA processing. The protein is Nucleolar protein 11 (NOL11) of Gallus gallus (Chicken).